The sequence spans 778 residues: NAD-dependent deacetylase sir2B (778 aa).

ANK repeat units lie at residues 83 to 112, 114 to 142, 148 to 178, 191 to 221, 225 to 255, 260 to 289, 317 to 354, 358 to 390, and 394 to 423; these read LNWT…EISI, RYTA…VPNG, DMET…SMNS, HGVS…DINS, DNST…ELMN, YGNS…KIII, DGST…QVNG, GNAT…DPTI, and YGWT…LTNS. Residues 438–458 form a disordered region; that stretch reads SSTSTSSSSSSSSSSSSSSSS. The Deacetylase sirtuin-type domain maps to 465 to 778; sequence KEELKLKGIE…DYFNTLFNSF (314 aa). The active-site Proton acceptor is the histidine 608. The Zn(2+) site is built by cysteine 616, cysteine 619, cysteine 642, and cysteine 647. The tract at residues 727–746 is disordered; the sequence is KLKQQQENESGESSNDNDNN. Residues 733-746 show a composition bias toward low complexity; the sequence is ENESGESSNDNDNN.

The protein belongs to the sirtuin family. Zn(2+) serves as cofactor.

The catalysed reaction is N(6)-acetyl-L-lysyl-[protein] + NAD(+) + H2O = 2''-O-acetyl-ADP-D-ribose + nicotinamide + L-lysyl-[protein]. Functionally, NAD-dependent deacetylase, which plays an important role in the regulation of transcriptional repression. This chain is NAD-dependent deacetylase sir2B (sir2B), found in Dictyostelium discoideum (Social amoeba).